The primary structure comprises 489 residues: Long chain base biosynthesis protein 2d (489 aa).

The chain crosses the membrane as a helical span at residues 4–24; it reads LPYVTALTTLFSYGLLFAFGQ. The residue at position 311 (Lys-311) is an N6-(pyridoxal phosphate)lysine.

The protein belongs to the class-II pyridoxal-phosphate-dependent aminotransferase family. As to quaternary structure, heterodimer with LCB1. Component of the serine palmitoyltransferase (SPT) complex, composed of LCB1 and LCB2. The cofactor is pyridoxal 5'-phosphate.

It localises to the endoplasmic reticulum membrane. It catalyses the reaction L-serine + hexadecanoyl-CoA + H(+) = 3-oxosphinganine + CO2 + CoA. It participates in lipid metabolism; sphingolipid metabolism. In terms of biological role, serine palmitoyltransferase (SPT). The heterodimer formed with LCB1 constitutes the catalytic core. The protein is Long chain base biosynthesis protein 2d of Oryza sativa subsp. japonica (Rice).